The chain runs to 208 residues: Redox-sensing transcriptional repressor Rex (208 aa).

Residues 16-55 (VYSRYLENLYRKGITTVSSADIAQGVGVTSAQVRKDLAYF) constitute a DNA-binding region (H-T-H motif). Residue 90-95 (GAGNLG) participates in NAD(+) binding.

It belongs to the transcriptional regulatory Rex family. In terms of assembly, homodimer.

The protein localises to the cytoplasm. Functionally, modulates transcription in response to changes in cellular NADH/NAD(+) redox state. The sequence is that of Redox-sensing transcriptional repressor Rex from Carboxydothermus hydrogenoformans (strain ATCC BAA-161 / DSM 6008 / Z-2901).